A 443-amino-acid chain; its full sequence is UDP-N-acetylmuramate--L-alanine ligase (443 aa).

Position 110–116 (110–116) interacts with ATP; the sequence is GAHGKTS.

It belongs to the MurCDEF family.

It localises to the cytoplasm. The enzyme catalyses UDP-N-acetyl-alpha-D-muramate + L-alanine + ATP = UDP-N-acetyl-alpha-D-muramoyl-L-alanine + ADP + phosphate + H(+). The protein operates within cell wall biogenesis; peptidoglycan biosynthesis. Functionally, cell wall formation. The chain is UDP-N-acetylmuramate--L-alanine ligase from Streptococcus agalactiae serotype Ia (strain ATCC 27591 / A909 / CDC SS700).